The chain runs to 105 residues: Urease subunit beta (105 aa).

This sequence belongs to the urease beta subunit family. As to quaternary structure, heterotrimer of UreA (gamma), UreB (beta) and UreC (alpha) subunits. Three heterotrimers associate to form the active enzyme.

The protein localises to the cytoplasm. The catalysed reaction is urea + 2 H2O + H(+) = hydrogencarbonate + 2 NH4(+). The protein operates within nitrogen metabolism; urea degradation; CO(2) and NH(3) from urea (urease route): step 1/1. The polypeptide is Urease subunit beta (Prochlorococcus marinus (strain MIT 9313)).